The primary structure comprises 237 residues: Ribonuclease PH (237 aa).

Phosphate is bound by residues Arg86 and 124–126 (GTR).

Belongs to the RNase PH family. As to quaternary structure, homohexameric ring arranged as a trimer of dimers.

It catalyses the reaction tRNA(n+1) + phosphate = tRNA(n) + a ribonucleoside 5'-diphosphate. Phosphorolytic 3'-5' exoribonuclease that plays an important role in tRNA 3'-end maturation. Removes nucleotide residues following the 3'-CCA terminus of tRNAs; can also add nucleotides to the ends of RNA molecules by using nucleoside diphosphates as substrates, but this may not be physiologically important. Probably plays a role in initiation of 16S rRNA degradation (leading to ribosome degradation) during starvation. The polypeptide is Ribonuclease PH (Shewanella denitrificans (strain OS217 / ATCC BAA-1090 / DSM 15013)).